The chain runs to 424 residues: GTPase Obg (424 aa).

In terms of domain architecture, Obg spans 1–158 (MFVDRARIYI…LWVILELKLL (158 aa)). The 172-residue stretch at 159 to 330 (ADVGLIGFPN…LIYYAAQKLK (172 aa)) folds into the OBG-type G domain. Residues 165–172 (GFPNVGKS), 190–194 (FTTIN), 212–215 (DIPG), 282–285 (NKMD), and 311–313 (SAA) contribute to the GTP site. Ser-172 and Thr-192 together coordinate Mg(2+). The OCT domain occupies 347-424 (YTAVEEEPFN…MYDLEFEYFR (78 aa)).

It belongs to the TRAFAC class OBG-HflX-like GTPase superfamily. OBG GTPase family. Monomer. Mg(2+) serves as cofactor.

The protein localises to the cytoplasm. In terms of biological role, an essential GTPase which binds GTP, GDP and possibly (p)ppGpp with moderate affinity, with high nucleotide exchange rates and a fairly low GTP hydrolysis rate. Plays a role in control of the cell cycle, stress response, ribosome biogenesis and in those bacteria that undergo differentiation, in morphogenesis control. In Acetivibrio thermocellus (strain ATCC 27405 / DSM 1237 / JCM 9322 / NBRC 103400 / NCIMB 10682 / NRRL B-4536 / VPI 7372) (Clostridium thermocellum), this protein is GTPase Obg.